The sequence spans 1653 residues: Protein strawberry notch (1653 aa).

Disordered stretches follow at residues 1–46 (MTSK…GRDL), 190–211 (GSPA…GGAI), 237–265 (GSNA…PNPG), 317–345 (NNQK…VKGN), and 883–1043 (SVAD…PSGS). Over residues 11-36 (DADDDNDNFDEDDSGSDFDDDEDPDQ) the composition is skewed to acidic residues. Residues serine 24 and serine 26 each carry the phosphoserine modification. The segment covering 194–205 (ARSSGNAGTTGS) has biased composition (polar residues). Residues 256–265 (SPTGGIPNPG) are compositionally biased toward low complexity. The span at 329–342 (GSGGPAGGAPGSGV) shows a compositional bias: gly residues. A compositionally biased stretch (low complexity) spans 883 to 901 (SVADSTSSLSNNSNITTAA). Residues serine 929 and serine 931 each carry the phosphoserine modification. Residues 966 to 975 (IDDEDEDHDV) show a composition bias toward acidic residues. Positions 980 to 998 (RSVASDASSDFNPFFSGSD) are enriched in polar residues. A compositionally biased stretch (basic residues) spans 1008–1027 (RSKKSKKAQKKSKKKVKKEK). Residues 1064–1125 (LSTQDKIQDL…RKIERLGARL (62 aa)) are a coiled coil.

This sequence belongs to the SBNO family. In terms of assembly, interacts with vg for function in the wing disk. Interacts with Su(H) for function in the eye disk. As to expression, at stage 8, when the formation of the midline precursor cells depends on Notch signaling, high level of expression is seen in the midline precursor cells and a lower level in the surrounding epidermal cells. Between stages 11 and 14, expression is uniform throughout the epidermis, and at stage 16, high level of expression is restricted to the central nervous system. Expressed in the larval leg, wing and eye imaginal disks. Expression is over the wing disk and accumulates within the pleural region.

Its subcellular location is the nucleus. Notch pathway component, may contribute to the specificity between lateral and inductive Notch signaling pathways in the wing disk. Required during many developmental stages including oogenesis, embryogenesis and imaginal development of the eye, wing and leg. Ebi and sno regulate EGFR-dependent Delta transcription in the developing eye, by antagonizing a repressor function of Suppressor of Hairless (Su(H)). They are required in the R-cells for normal cone cell development. The polypeptide is Protein strawberry notch (Drosophila melanogaster (Fruit fly)).